The following is a 70-amino-acid chain: Large ribosomal subunit protein bL31 (70 aa).

Positions 16, 18, 37, and 40 each coordinate Zn(2+).

This sequence belongs to the bacterial ribosomal protein bL31 family. Type A subfamily. Part of the 50S ribosomal subunit. It depends on Zn(2+) as a cofactor.

Binds the 23S rRNA. The sequence is that of Large ribosomal subunit protein bL31 from Actinobacillus pleuropneumoniae serotype 5b (strain L20).